We begin with the raw amino-acid sequence, 86 residues long: CRISPR-associated endoribonuclease Cas2 (86 aa).

Mg(2+) is bound at residue Asp-8.

It belongs to the CRISPR-associated endoribonuclease Cas2 protein family. As to quaternary structure, homodimer, forms a heterotetramer with a Cas1 homodimer. Mg(2+) is required as a cofactor.

Its function is as follows. CRISPR (clustered regularly interspaced short palindromic repeat), is an adaptive immune system that provides protection against mobile genetic elements (viruses, transposable elements and conjugative plasmids). CRISPR clusters contain sequences complementary to antecedent mobile elements and target invading nucleic acids. CRISPR clusters are transcribed and processed into CRISPR RNA (crRNA). Functions as a ssRNA-specific endoribonuclease. Involved in the integration of spacer DNA into the CRISPR cassette. Plasmid targeted by CRISPR locus P1 transform wild-type cells very poorly. This is CRISPR-associated endoribonuclease Cas2 from Haloferax volcanii (strain ATCC 29605 / DSM 3757 / JCM 8879 / NBRC 14742 / NCIMB 2012 / VKM B-1768 / DS2) (Halobacterium volcanii).